A 193-amino-acid chain; its full sequence is Protein PrsJ (193 aa).

An N-terminal signal peptide occupies residues M1 to A27.

The protein localises to the periplasm. Its function is as follows. This protein maintains pilus integrity and thus is an important participant in pilus assembly. It may function as molecular chaperone directly or indirectly in the correct assembly of PapA subunits. The chain is Protein PrsJ (prsJ) from Escherichia coli.